The primary structure comprises 520 residues: Protein EARLY FLOWERING 5 (520 aa).

3 consecutive short sequence motifs (nuclear localization signal) follow at residues 16–23 (YRKQIRKR), 52–59 (IRKLDMSK), and 71–78 (KKRQLEDT). The interval 83 to 410 (VKKRKEYDEK…PPSSFQDGQA (328 aa)) is disordered. Composition is skewed to basic and acidic residues over residues 87–97 (KEYDEKKKEQG) and 114–126 (LTGEEDLKPEDSV). The span at 148–168 (SSIGLAISSDGASSSSAALSS) shows a compositional bias: low complexity. 3 stretches are compositionally biased toward pro residues: residues 198 to 207 (PLPPLPPLPP), 216 to 227 (SPFPPPPPGPPP), and 235 to 253 (PPLPPPPQLPQSSQPPPPG). Polar residues-rich tracts occupy residues 267–281 (SDFTFDNRMNANITS), 300–312 (AESNASSFQNANL), and 326–343 (QQHQSTFAGAAASLTNFQ). Pro residues-rich tracts occupy residues 346–369 (VHPPPGMLRFPPPPPPLDMHPPHP) and 378–403 (PRPPYGPPPGPPPMMRPPLPPGPPPS).

In terms of tissue distribution, in seedlings, mostly expressed in the shoot apical meristem (SAM) and root tip.

It localises to the nucleus. Involved in the regulation of flowering time in both long and short days. In Arabidopsis thaliana (Mouse-ear cress), this protein is Protein EARLY FLOWERING 5.